The chain runs to 336 residues: Phosphoribosylformylglycinamidine cyclo-ligase (336 aa).

The protein belongs to the AIR synthase family.

It is found in the cytoplasm. It carries out the reaction 2-formamido-N(1)-(5-O-phospho-beta-D-ribosyl)acetamidine + ATP = 5-amino-1-(5-phospho-beta-D-ribosyl)imidazole + ADP + phosphate + H(+). It functions in the pathway purine metabolism; IMP biosynthesis via de novo pathway; 5-amino-1-(5-phospho-D-ribosyl)imidazole from N(2)-formyl-N(1)-(5-phospho-D-ribosyl)glycinamide: step 2/2. The sequence is that of Phosphoribosylformylglycinamidine cyclo-ligase from Caldanaerobacter subterraneus subsp. tengcongensis (strain DSM 15242 / JCM 11007 / NBRC 100824 / MB4) (Thermoanaerobacter tengcongensis).